A 214-amino-acid chain; its full sequence is Large ribosomal subunit protein uL1 (214 aa).

Belongs to the universal ribosomal protein uL1 family. In terms of assembly, component of the large ribosomal subunit.

Its subcellular location is the cytoplasm. In terms of biological role, component of the large ribosomal subunit. The ribosome is a large ribonucleoprotein complex responsible for the synthesis of proteins in the cell. In Entamoeba histolytica (strain ATCC 30459 / HM-1:IMSS / ABRM), this protein is Large ribosomal subunit protein uL1 (RPL10A).